A 341-amino-acid polypeptide reads, in one-letter code: MSDWTHKIAVLGAGSWGTALAALLARHGHPTVLWGRDAAMVDTIDRTHENARYLPGIALPDSLRATTDLQAAVADATWILVVVPSHAFTETIRLIAPLRPAGAGVAWATKGFEPGSGRFLHEVARDILGPSVPLAVVTGPSFAKEVTLGLPTAITVHGDDAAFAQVVADAMHGPTFRAYTGDDMVGAELGGAMKNVLAVATGVADGMQLGLNARAGLITRGLNEMLRLAAVIGARPETLMGLAGLGDLVLTCTGDLSRNRRLGLALGRGQSLDDAIREIGQVVESVQTADEVMRQAEHHGIELPISNAVRAVLHGEITPEAGLKELLARERKPEYPQTLFT.

The NADPH site is built by S15, W16, R36, and K110. K110, G139, and S141 together coordinate sn-glycerol 3-phosphate. A143 contacts NADPH. Sn-glycerol 3-phosphate contacts are provided by K194, D247, S257, R258, and N259. The active-site Proton acceptor is K194. Position 258 (R258) interacts with NADPH. NADPH is bound by residues V282 and E284.

It belongs to the NAD-dependent glycerol-3-phosphate dehydrogenase family.

Its subcellular location is the cytoplasm. It catalyses the reaction sn-glycerol 3-phosphate + NAD(+) = dihydroxyacetone phosphate + NADH + H(+). The catalysed reaction is sn-glycerol 3-phosphate + NADP(+) = dihydroxyacetone phosphate + NADPH + H(+). Its pathway is membrane lipid metabolism; glycerophospholipid metabolism. In terms of biological role, catalyzes the reduction of the glycolytic intermediate dihydroxyacetone phosphate (DHAP) to sn-glycerol 3-phosphate (G3P), the key precursor for phospholipid synthesis. In Xanthomonas euvesicatoria pv. vesicatoria (strain 85-10) (Xanthomonas campestris pv. vesicatoria), this protein is Glycerol-3-phosphate dehydrogenase [NAD(P)+].